The primary structure comprises 434 residues: Methylenetetrahydrofolate--tRNA-(uracil-5-)-methyltransferase TrmFO (434 aa).

9-14 (GAGLAG) contacts FAD.

The protein belongs to the MnmG family. TrmFO subfamily. It depends on FAD as a cofactor.

Its subcellular location is the cytoplasm. It catalyses the reaction uridine(54) in tRNA + (6R)-5,10-methylene-5,6,7,8-tetrahydrofolate + NADH + H(+) = 5-methyluridine(54) in tRNA + (6S)-5,6,7,8-tetrahydrofolate + NAD(+). The catalysed reaction is uridine(54) in tRNA + (6R)-5,10-methylene-5,6,7,8-tetrahydrofolate + NADPH + H(+) = 5-methyluridine(54) in tRNA + (6S)-5,6,7,8-tetrahydrofolate + NADP(+). Catalyzes the folate-dependent formation of 5-methyl-uridine at position 54 (M-5-U54) in all tRNAs. This Fusobacterium nucleatum subsp. nucleatum (strain ATCC 25586 / DSM 15643 / BCRC 10681 / CIP 101130 / JCM 8532 / KCTC 2640 / LMG 13131 / VPI 4355) protein is Methylenetetrahydrofolate--tRNA-(uracil-5-)-methyltransferase TrmFO.